The following is a 436-amino-acid chain: MKNVGIISLGCHKNTIDSEKMLAILKEKGYNIVNDENKADILIINTCGFIEDAKRESIECIIEMGKLKKHRLKYLIATGCLSERYNKELLKELPELDAVIGTGDFHKIAEVIEKIEKGKTVLEYGHANLLNDEGIQRILTTPNYYAYLKIAEGCSNACSFCIIPRLRGRYRSRKMEDILREAEELVKKGVKELILIAQDTTKYGVDVYKKFMLPQLLKEISKIDGLKWIRLLYAYPDSVTEELVEEIKNNEKIVKYIDIPLQHSHDEVLKRMNRNTNKQKIEEVISRLRSIPYMVIRTTFMVGFPGETEEEFEDLKQFVKEKRFERVGVFTYSREEGTKSYYMKPQIKKSVKIKRQQELMEIQKEISYQHNLSKVGKQLEVLIEGFEDGIYYGRSYMDAPEIDGVVYVKSDKKLKAGDFVVATITDAYEYDLVGEY.

An MTTase N-terminal domain is found at 2–117 (KNVGIISLGC…IAEVIEKIEK (116 aa)). The [4Fe-4S] cluster site is built by cysteine 11, cysteine 47, cysteine 80, cysteine 154, cysteine 158, and cysteine 161. In terms of domain architecture, Radical SAM core spans 140–369 (TTPNYYAYLK…MEIQKEISYQ (230 aa)). The TRAM domain occupies 372-436 (LSKVGKQLEV…AYEYDLVGEY (65 aa)).

It belongs to the methylthiotransferase family. RimO subfamily. [4Fe-4S] cluster is required as a cofactor.

It localises to the cytoplasm. It catalyses the reaction L-aspartate(89)-[ribosomal protein uS12]-hydrogen + (sulfur carrier)-SH + AH2 + 2 S-adenosyl-L-methionine = 3-methylsulfanyl-L-aspartate(89)-[ribosomal protein uS12]-hydrogen + (sulfur carrier)-H + 5'-deoxyadenosine + L-methionine + A + S-adenosyl-L-homocysteine + 2 H(+). Functionally, catalyzes the methylthiolation of an aspartic acid residue of ribosomal protein uS12. This is Ribosomal protein uS12 methylthiotransferase RimO from Thermoanaerobacter sp. (strain X514).